Reading from the N-terminus, the 115-residue chain is ATP-dependent Clp protease adapter protein ClpS (115 aa).

The protein belongs to the ClpS family. As to quaternary structure, binds to the N-terminal domain of the chaperone ClpA.

In terms of biological role, involved in the modulation of the specificity of the ClpAP-mediated ATP-dependent protein degradation. The chain is ATP-dependent Clp protease adapter protein ClpS from Leptothrix cholodnii (strain ATCC 51168 / LMG 8142 / SP-6) (Leptothrix discophora (strain SP-6)).